The primary structure comprises 153 residues: Insulin-like growth factor 1 (153 aa).

A b region spans residues 49 to 77 (GPETLCGAELVDALQFVCGDRGFYFNKPT). 3 disulfides stabilise this stretch: cysteine 54–cysteine 96, cysteine 66–cysteine 109, and cysteine 95–cysteine 100. Residues 78–89 (GYGSSSRRAPQT) are c. Residues 90–110 (GIVDECCFRSCDLRRLEMYCA) form an a region. A d region spans residues 111–118 (PLKPAKSA). A propeptide spans 119 to 153 (RSVRAQRHTDMPKAQKEVHLKNASRGSAGNKNYRM) (e peptide). The disordered stretch occupies residues 120–153 (SVRAQRHTDMPKAQKEVHLKNASRGSAGNKNYRM). The segment covering 125-138 (RHTDMPKAQKEVHL) has biased composition (basic and acidic residues). Polar residues predominate over residues 142-153 (SRGSAGNKNYRM).

It belongs to the insulin family. Forms a ternary complex with IGFR1 and ITGAV:ITGB3. Forms a ternary complex with IGFR1 and ITGA6:ITGB4. Forms a ternary complex with IGFBP3 and ALS.

It is found in the secreted. Its function is as follows. The insulin-like growth factors, isolated from plasma, are structurally and functionally related to insulin but have a much higher growth-promoting activity. May be a physiological regulator of [1-14C]-2-deoxy-D-glucose (2DG) transport and glycogen synthesis in osteoblasts. Stimulates glucose transport in bone-derived osteoblastic (PyMS) cells and is effective at much lower concentrations than insulin, not only regarding glycogen and DNA synthesis but also with regard to enhancing glucose uptake. May play a role in synapse maturation. Ca(2+)-dependent exocytosis of IGF1 is required for sensory perception of smell in the olfactory bulb. Acts as a ligand for IGF1R. Binds to the alpha subunit of IGF1R, leading to the activation of the intrinsic tyrosine kinase activity which autophosphorylates tyrosine residues in the beta subunit thus initiating a cascade of down-stream signaling events leading to activation of the PI3K-AKT/PKB and the Ras-MAPK pathways. Binds to integrins ITGAV:ITGB3 and ITGA6:ITGB4. Its binding to integrins and subsequent ternary complex formation with integrins and IGFR1 are essential for IGF1 signaling. Induces the phosphorylation and activation of IGFR1, MAPK3/ERK1, MAPK1/ERK2 and AKT1. As part of the MAPK/ERK signaling pathway, acts as a negative regulator of apoptosis in cardiomyocytes via promotion of STUB1/CHIP-mediated ubiquitination and degradation of ICER-type isoforms of CREM. The protein is Insulin-like growth factor 1 of Rhinopithecus roxellana (Golden snub-nosed monkey).